Consider the following 671-residue polypeptide: MPSLMLSDKKEEKKMKKKMALDTPELDSKKGKKEQKLKLSDSDEEESEKKKSKKKDKKRKASEEEDEVKSDSSSEKKKSSKKVKLGVEDVEVDNPNAVSKFRISAPLREKLKANGIEALFPIQASTFDMVLDGADLVGRARTGQGKTLAFVLPILESLVNGPAKSKRKMGYGRSPSVLVLLPTRELAKQVAADFDAYGGSLGLSSCCLYGGDSYPVQEGKLKRGVDIVVGTPGRIKDHIERQNLDFSYLQFRVLDEADEMLRMGFVEDVELILGKVEDSTKVQTLLFSATLPSWVKNISNRFLKRDQKTIDLVGNDKMKASNSVRHIAIPCNKAAMARLIPDIISCYSSGGQTIIFAETKVQVSELSGLLDGSRALHGEIPQSQREVTLAGFRNGKFATLVATNVAARGLDINDVQLIIQCEPPREVEAYIHRSGRTGRAGNTGVAVTLYDSRKSSVSRIEKEAGIKFEHLAAPQPDEIARSGGMEAAEKVKQVCDSVVPAFLEAAKELLETSGLSAEVLLAKALAKTAGFTEIKKRSLLTSMENYVTLHLEAGKPIYSPSFVYGLLRRVLPDDKVEMIEGLSLTADKTGAVFDVKQSDLDLFIAGAQKSAGSMSLEVVKVMPKLQEREPLPQKRFGGGGRGNRFGGGGGNRFGGGGGRGRGGSGGRGQRY.

Residues 1–84 (MPSLMLSDKK…EKKKSSKKVK (84 aa)) are disordered. A compositionally biased stretch (basic and acidic residues) spans 26 to 41 (LDSKKGKKEQKLKLSD). Phosphoserine occurs at positions 40 and 42. The segment covering 50–60 (KKSKKKDKKRK) has biased composition (basic residues). The short motif at 96–124 (NAVSKFRISAPLREKLKANGIEALFPIQA) is the Q motif element. The Helicase ATP-binding domain maps to 127 to 309 (FDMVLDGADL…NRFLKRDQKT (183 aa)). Position 140 to 147 (140 to 147 (ARTGQGKT)) interacts with ATP. The short motif at 255-258 (DEAD) is the DEAD box element. One can recognise a Helicase C-terminal domain in the interval 339-479 (LIPDIISCYS…HLAAPQPDEI (141 aa)). A disordered region spans residues 627-671 (EREPLPQKRFGGGGRGNRFGGGGGNRFGGGGGRGRGGSGGRGQRY). Gly residues predominate over residues 636–671 (FGGGGRGNRFGGGGGNRFGGGGGRGRGGSGGRGQRY).

This sequence belongs to the DEAD box helicase family. DDX21/DDX50 subfamily.

It localises to the nucleus. The catalysed reaction is ATP + H2O = ADP + phosphate + H(+). In Arabidopsis thaliana (Mouse-ear cress), this protein is DEAD-box ATP-dependent RNA helicase 7 (RH7).